The following is a 188-amino-acid chain: UPF0461 protein C5orf24 (188 aa).

Residues 1–10 (MMHPVASSNP) show a composition bias toward polar residues. A disordered region spans residues 1-20 (MMHPVASSNPAFCGPGKPSC). A Phosphoserine modification is found at serine 37. Lysine 75 is covalently cross-linked (Glycyl lysine isopeptide (Lys-Gly) (interchain with G-Cter in SUMO2)). The interval 79–142 (KKKKNLNRSG…GYKVSPGRPP (64 aa)) is disordered. The span at 80 to 92 (KKKNLNRSGKRGR) shows a compositional bias: basic residues. Residues 94-107 (SGTTKSAGYRTSTG) show a composition bias toward polar residues. Phosphoserine occurs at positions 121 and 180. Lysine 184 participates in a covalent cross-link: Glycyl lysine isopeptide (Lys-Gly) (interchain with G-Cter in SUMO2).

It belongs to the UPF0461 family.

The sequence is that of UPF0461 protein C5orf24 (C5orf24) from Homo sapiens (Human).